Here is a 554-residue protein sequence, read N- to C-terminus: CTP synthase (554 aa).

The segment at Met-1 to Leu-265 is amidoligase domain. Position 13 (Ser-13) interacts with CTP. Ser-13 is a binding site for UTP. ATP contacts are provided by residues Ser-14–Ile-19 and Asp-71. 2 residues coordinate Mg(2+): Asp-71 and Glu-139. CTP-binding positions include Asp-146 to Glu-148, Lys-186 to Gln-191, and Lys-222. UTP-binding positions include Lys-186–Gln-191 and Lys-222. The 254-residue stretch at Thr-292–Gly-545 folds into the Glutamine amidotransferase type-1 domain. Gly-353 provides a ligand contact to L-glutamine. The active-site Nucleophile; for glutamine hydrolysis is Cys-380. Residues Tyr-381 to Gln-384, Glu-404, and Arg-471 contribute to the L-glutamine site. Active-site residues include His-518 and Glu-520.

The protein belongs to the CTP synthase family. As to quaternary structure, homotetramer.

It carries out the reaction UTP + L-glutamine + ATP + H2O = CTP + L-glutamate + ADP + phosphate + 2 H(+). The catalysed reaction is L-glutamine + H2O = L-glutamate + NH4(+). It catalyses the reaction UTP + NH4(+) + ATP = CTP + ADP + phosphate + 2 H(+). It participates in pyrimidine metabolism; CTP biosynthesis via de novo pathway; CTP from UDP: step 2/2. Allosterically activated by GTP, when glutamine is the substrate; GTP has no effect on the reaction when ammonia is the substrate. The allosteric effector GTP functions by stabilizing the protein conformation that binds the tetrahedral intermediate(s) formed during glutamine hydrolysis. Inhibited by the product CTP, via allosteric rather than competitive inhibition. Its function is as follows. Catalyzes the ATP-dependent amination of UTP to CTP with either L-glutamine or ammonia as the source of nitrogen. Regulates intracellular CTP levels through interactions with the four ribonucleotide triphosphates. The polypeptide is CTP synthase (Xylella fastidiosa (strain M12)).